The chain runs to 271 residues: Formamidopyrimidine-DNA glycosylase (271 aa).

The active-site Schiff-base intermediate with DNA is the proline 2. Residue glutamate 3 is the Proton donor of the active site. The Proton donor; for beta-elimination activity role is filled by lysine 57. Histidine 90, arginine 109, and lysine 151 together coordinate DNA. Residues 236-270 (HVYGRGGETCTSCGNLLSEIRLGQRTTVFCGICQT) form an FPG-type zinc finger. Arginine 260 functions as the Proton donor; for delta-elimination activity in the catalytic mechanism.

The protein belongs to the FPG family. In terms of assembly, monomer. The cofactor is Zn(2+).

It catalyses the reaction Hydrolysis of DNA containing ring-opened 7-methylguanine residues, releasing 2,6-diamino-4-hydroxy-5-(N-methyl)formamidopyrimidine.. It carries out the reaction 2'-deoxyribonucleotide-(2'-deoxyribose 5'-phosphate)-2'-deoxyribonucleotide-DNA = a 3'-end 2'-deoxyribonucleotide-(2,3-dehydro-2,3-deoxyribose 5'-phosphate)-DNA + a 5'-end 5'-phospho-2'-deoxyribonucleoside-DNA + H(+). Involved in base excision repair of DNA damaged by oxidation or by mutagenic agents. Acts as a DNA glycosylase that recognizes and removes damaged bases. Has a preference for oxidized purines, such as 7,8-dihydro-8-oxoguanine (8-oxoG). Has AP (apurinic/apyrimidinic) lyase activity and introduces nicks in the DNA strand. Cleaves the DNA backbone by beta-delta elimination to generate a single-strand break at the site of the removed base with both 3'- and 5'-phosphates. This is Formamidopyrimidine-DNA glycosylase from Shewanella sp. (strain W3-18-1).